The primary structure comprises 167 residues: Anaerobic nitrite reductase NSHB4 (167 aa).

Residues 12-162 (RFTEEQEALV…LVAAIKEGMK (151 aa)) form the Globin domain. The Homodimerization signature appears at 45-49 (EVAPS). Positions 55, 73, 103, 107, and 108 each coordinate heme b. The Homodimerization signature appears at 115–127 (DTHFEVARFALLE).

The protein belongs to the plant globin family. Homodimer. Heme b serves as cofactor.

It is found in the cytoplasm. The protein localises to the nucleus. It carries out the reaction Fe(III)-heme b-[protein] + nitric oxide + H2O = Fe(II)-heme b-[protein] + nitrite + 2 H(+). Phytoglobin that reduces nitrite to nitric oxide under anoxic conditions (e.g. during flooding or in waterlogged soil). May not function as an oxygen storage or transport protein. Has an unusually high affinity for O(2) through an hexacoordinate heme iron because of a very low dissociation constant. This Oryza sativa subsp. indica (Rice) protein is Anaerobic nitrite reductase NSHB4.